A 356-amino-acid chain; its full sequence is NAC domain-containing protein JA2L (356 aa).

An NAC domain is found at 14–162 (LPPGFRFYPT…DWVLCRIYKK (149 aa)). The DNA-binding element occupies 111 to 168 (VGIKKALVFYIGKAPKGTKTNWIMHEYRLSEPTTKTGSSRLDDWVLCRIYKKNSGGQK). Residues 163 to 191 (NSGGQKSSCSDLQNKDISHASSSSSSSQF) form a disordered region. Residues 164-174 (SGGQKSSCSDL) show a composition bias toward polar residues.

In terms of tissue distribution, expressed in guard cells of the epidermis.

The protein resides in the nucleus. Its function is as follows. Transcription factor that acts downstream of MYC2 in the jasmonate-mediated response to Botrytis cinerea infection. With MYC2 forms a transcription module that regulates wounding-responsive genes. Involved in jasmonate- and coronatine-mediated stomatal reopening in response to Pseudomonas syringae pv tomato DC3000 infection. Regulates the expression of threonine deaminase 2 (TD2) through promoter binding. The sequence is that of NAC domain-containing protein JA2L from Solanum lycopersicum (Tomato).